A 121-amino-acid chain; its full sequence is Large ribosomal subunit protein bL12 (121 aa).

Belongs to the bacterial ribosomal protein bL12 family. As to quaternary structure, homodimer. Part of the ribosomal stalk of the 50S ribosomal subunit. Forms a multimeric L10(L12)X complex, where L10 forms an elongated spine to which 2 to 4 L12 dimers bind in a sequential fashion. Binds GTP-bound translation factors.

Functionally, forms part of the ribosomal stalk which helps the ribosome interact with GTP-bound translation factors. Is thus essential for accurate translation. The protein is Large ribosomal subunit protein bL12 of Serratia proteamaculans (strain 568).